Reading from the N-terminus, the 946-residue chain is Bifunctional glutamine synthetase adenylyltransferase/adenylyl-removing enzyme (946 aa).

The interval 1–441 is adenylyl removase; the sequence is MSLLNDAALH…EFNWVIGDDE (441 aa). Residues 448–946 form an adenylyl transferase region; that stretch reads DQALSELWAL…VIKIWEKFLD (499 aa).

Belongs to the GlnE family. Requires Mg(2+) as cofactor.

The catalysed reaction is [glutamine synthetase]-O(4)-(5'-adenylyl)-L-tyrosine + phosphate = [glutamine synthetase]-L-tyrosine + ADP. It carries out the reaction [glutamine synthetase]-L-tyrosine + ATP = [glutamine synthetase]-O(4)-(5'-adenylyl)-L-tyrosine + diphosphate. Its function is as follows. Involved in the regulation of glutamine synthetase GlnA, a key enzyme in the process to assimilate ammonia. When cellular nitrogen levels are high, the C-terminal adenylyl transferase (AT) inactivates GlnA by covalent transfer of an adenylyl group from ATP to specific tyrosine residue of GlnA, thus reducing its activity. Conversely, when nitrogen levels are low, the N-terminal adenylyl removase (AR) activates GlnA by removing the adenylyl group by phosphorolysis, increasing its activity. The regulatory region of GlnE binds the signal transduction protein PII (GlnB) which indicates the nitrogen status of the cell. The polypeptide is Bifunctional glutamine synthetase adenylyltransferase/adenylyl-removing enzyme (Psychromonas ingrahamii (strain DSM 17664 / CCUG 51855 / 37)).